Here is a 238-residue protein sequence, read N- to C-terminus: Pyridoxine 5'-phosphate synthase (238 aa).

2 residues coordinate 3-amino-2-oxopropyl phosphate: asparagine 7 and arginine 18. Histidine 43 serves as the catalytic Proton acceptor. Positions 45 and 50 each coordinate 1-deoxy-D-xylulose 5-phosphate. Residue glutamate 70 is the Proton acceptor of the active site. Residue threonine 100 coordinates 1-deoxy-D-xylulose 5-phosphate. Histidine 190 (proton donor) is an active-site residue. 3-amino-2-oxopropyl phosphate contacts are provided by residues aspartate 191 and 213–214; that span reads GH.

Belongs to the PNP synthase family. In terms of assembly, homooctamer; tetramer of dimers.

The protein resides in the cytoplasm. It catalyses the reaction 3-amino-2-oxopropyl phosphate + 1-deoxy-D-xylulose 5-phosphate = pyridoxine 5'-phosphate + phosphate + 2 H2O + H(+). It participates in cofactor biosynthesis; pyridoxine 5'-phosphate biosynthesis; pyridoxine 5'-phosphate from D-erythrose 4-phosphate: step 5/5. Catalyzes the complicated ring closure reaction between the two acyclic compounds 1-deoxy-D-xylulose-5-phosphate (DXP) and 3-amino-2-oxopropyl phosphate (1-amino-acetone-3-phosphate or AAP) to form pyridoxine 5'-phosphate (PNP) and inorganic phosphate. The polypeptide is Pyridoxine 5'-phosphate synthase (Cytophaga hutchinsonii (strain ATCC 33406 / DSM 1761 / CIP 103989 / NBRC 15051 / NCIMB 9469 / D465)).